We begin with the raw amino-acid sequence, 70 residues long: Large ribosomal subunit protein bL31 (70 aa).

Zn(2+) is bound by residues C16, C18, C37, and C40.

It belongs to the bacterial ribosomal protein bL31 family. Type A subfamily. As to quaternary structure, part of the 50S ribosomal subunit. The cofactor is Zn(2+).

Functionally, binds the 23S rRNA. This chain is Large ribosomal subunit protein bL31, found in Shewanella amazonensis (strain ATCC BAA-1098 / SB2B).